Consider the following 261-residue polypeptide: Cytochrome c oxidase subunit 3 (261 aa).

The Mitochondrial matrix portion of the chain corresponds to 1-15 (MTHQTHAYHMVNPSP). Residues 16–34 (WPLTGALSALLMTSGLIMW) traverse the membrane as a helical segment. At 35-40 (FHFNST) the chain is on the mitochondrial intermembrane side. The chain crosses the membrane as a helical span at residues 41-66 (TLLTLGLTTNMLTMYQWWRDVIREST). The Mitochondrial matrix portion of the chain corresponds to 67–72 (FQGHHT). A helical membrane pass occupies residues 73–105 (PTVQKGLRYGMILFIISEVLFFTGFFWAFYHSS). Residues 106–128 (LAPTPELGGCWPPTGIHPLNPLE) are Mitochondrial intermembrane-facing. Residues 129–152 (VPLLNTSVLLASGVSITWAHHSLM) traverse the membrane as a helical segment. Residues 153-155 (EGN) lie on the Mitochondrial matrix side of the membrane. Residues 156–183 (RNPMLQALFITIALGIYFTLLQASEYYE) form a helical membrane-spanning segment. Residues 184-190 (APFTISD) lie on the Mitochondrial intermembrane side of the membrane. A helical membrane pass occupies residues 191-223 (GVYGSTFFVATGFHGLHVIIGSTFLIVCFFRQL). Topologically, residues 224–232 (KFHFTSNHH) are mitochondrial matrix. The chain crosses the membrane as a helical span at residues 233–256 (FGFEAAAWYWHFVDVVWLFLYVSI). Residues 257–261 (YWWGS) lie on the Mitochondrial intermembrane side of the membrane.

The protein belongs to the cytochrome c oxidase subunit 3 family. As to quaternary structure, component of the cytochrome c oxidase (complex IV, CIV), a multisubunit enzyme composed of 14 subunits. The complex is composed of a catalytic core of 3 subunits MT-CO1, MT-CO2 and MT-CO3, encoded in the mitochondrial DNA, and 11 supernumerary subunits COX4I, COX5A, COX5B, COX6A, COX6B, COX6C, COX7A, COX7B, COX7C, COX8 and NDUFA4, which are encoded in the nuclear genome. The complex exists as a monomer or a dimer and forms supercomplexes (SCs) in the inner mitochondrial membrane with NADH-ubiquinone oxidoreductase (complex I, CI) and ubiquinol-cytochrome c oxidoreductase (cytochrome b-c1 complex, complex III, CIII), resulting in different assemblies (supercomplex SCI(1)III(2)IV(1) and megacomplex MCI(2)III(2)IV(2)).

The protein localises to the mitochondrion inner membrane. The enzyme catalyses 4 Fe(II)-[cytochrome c] + O2 + 8 H(+)(in) = 4 Fe(III)-[cytochrome c] + 2 H2O + 4 H(+)(out). Component of the cytochrome c oxidase, the last enzyme in the mitochondrial electron transport chain which drives oxidative phosphorylation. The respiratory chain contains 3 multisubunit complexes succinate dehydrogenase (complex II, CII), ubiquinol-cytochrome c oxidoreductase (cytochrome b-c1 complex, complex III, CIII) and cytochrome c oxidase (complex IV, CIV), that cooperate to transfer electrons derived from NADH and succinate to molecular oxygen, creating an electrochemical gradient over the inner membrane that drives transmembrane transport and the ATP synthase. Cytochrome c oxidase is the component of the respiratory chain that catalyzes the reduction of oxygen to water. Electrons originating from reduced cytochrome c in the intermembrane space (IMS) are transferred via the dinuclear copper A center (CU(A)) of subunit 2 and heme A of subunit 1 to the active site in subunit 1, a binuclear center (BNC) formed by heme A3 and copper B (CU(B)). The BNC reduces molecular oxygen to 2 water molecules using 4 electrons from cytochrome c in the IMS and 4 protons from the mitochondrial matrix. The chain is Cytochrome c oxidase subunit 3 (MT-CO3) from Madoqua guentheri (Guenther's dik-dik).